Consider the following 251-residue polypeptide: Diphthine synthase (251 aa).

S-adenosyl-L-methionine is bound by residues L9, D85, V88, 113–114 (SI), L165, A202, and H227.

It belongs to the diphthine synthase family. Homodimer.

It carries out the reaction 2-[(3S)-amino-3-carboxypropyl]-L-histidyl-[translation elongation factor 2] + 3 S-adenosyl-L-methionine = diphthine-[translation elongation factor 2] + 3 S-adenosyl-L-homocysteine + 3 H(+). The protein operates within protein modification; peptidyl-diphthamide biosynthesis. Its function is as follows. S-adenosyl-L-methionine-dependent methyltransferase that catalyzes the trimethylation of the amino group of the modified target histidine residue in translation elongation factor 2 (EF-2), to form an intermediate called diphthine. The three successive methylation reactions represent the second step of diphthamide biosynthesis. The polypeptide is Diphthine synthase (Methanosphaerula palustris (strain ATCC BAA-1556 / DSM 19958 / E1-9c)).